A 93-amino-acid polypeptide reads, in one-letter code: Large ribosomal subunit protein uL23cz/uL23cy (93 aa).

It belongs to the universal ribosomal protein uL23 family. As to quaternary structure, part of the 50S ribosomal subunit.

It is found in the plastid. It localises to the chloroplast. Functionally, binds to 23S rRNA. This is Large ribosomal subunit protein uL23cz/uL23cy (rpl23-A) from Acorus calamus (Sweet flag).